The chain runs to 120 residues: UPF0342 protein LAF_1331 (120 aa).

This sequence belongs to the UPF0342 family.

The sequence is that of UPF0342 protein LAF_1331 from Limosilactobacillus fermentum (strain NBRC 3956 / LMG 18251) (Lactobacillus fermentum).